Here is a 342-residue protein sequence, read N- to C-terminus: Dihydroorotase (342 aa).

Zn(2+) contacts are provided by His13 and His15. Substrate-binding positions include 15-17 and Asn41; that span reads HLR. Lys98, His135, and His173 together coordinate Zn(2+). N6-carboxylysine is present on Lys98. His135 serves as a coordination point for substrate. Leu218 lines the substrate pocket. Asp246 contributes to the Zn(2+) binding site. Asp246 is a catalytic residue. Residues His250 and Ala262 each contribute to the substrate site.

This sequence belongs to the metallo-dependent hydrolases superfamily. DHOase family. Class II DHOase subfamily. As to quaternary structure, homodimer. The cofactor is Zn(2+).

It carries out the reaction (S)-dihydroorotate + H2O = N-carbamoyl-L-aspartate + H(+). The protein operates within pyrimidine metabolism; UMP biosynthesis via de novo pathway; (S)-dihydroorotate from bicarbonate: step 3/3. Catalyzes the reversible cyclization of carbamoyl aspartate to dihydroorotate. The chain is Dihydroorotase from Vibrio cholerae serotype O1 (strain ATCC 39315 / El Tor Inaba N16961).